Reading from the N-terminus, the 137-residue chain is ATP synthase epsilon chain (137 aa).

Belongs to the ATPase epsilon chain family. F-type ATPases have 2 components, CF(1) - the catalytic core - and CF(0) - the membrane proton channel. CF(1) has five subunits: alpha(3), beta(3), gamma(1), delta(1), epsilon(1). CF(0) has three main subunits: a, b and c.

It is found in the cell membrane. Produces ATP from ADP in the presence of a proton gradient across the membrane. The polypeptide is ATP synthase epsilon chain (Desulforudis audaxviator (strain MP104C)).